Reading from the N-terminus, the 888-residue chain is Valine--tRNA ligase (888 aa).

The short motif at 43-53 (PNVTGTLHLGH) is the 'HIGH' region element. A 'KMSKS' region motif is present at residues 538 to 542 (KMSKS). K541 is an ATP binding site. Residues 821 to 888 (LIDLDAERAR…RLKAALGRLA (68 aa)) adopt a coiled-coil conformation.

It belongs to the class-I aminoacyl-tRNA synthetase family. ValS type 1 subfamily. As to quaternary structure, monomer.

The protein localises to the cytoplasm. The enzyme catalyses tRNA(Val) + L-valine + ATP = L-valyl-tRNA(Val) + AMP + diphosphate. Functionally, catalyzes the attachment of valine to tRNA(Val). As ValRS can inadvertently accommodate and process structurally similar amino acids such as threonine, to avoid such errors, it has a 'posttransfer' editing activity that hydrolyzes mischarged Thr-tRNA(Val) in a tRNA-dependent manner. In Gluconobacter oxydans (strain 621H) (Gluconobacter suboxydans), this protein is Valine--tRNA ligase.